We begin with the raw amino-acid sequence, 422 residues long: GTPase Obg (422 aa).

In terms of domain architecture, Obg spans 1–156; that stretch reads MKFIDEVNVL…FALRLVLKVL (156 aa). An OBG-type G domain is found at 157–324; it reads ADVGLVGKPS…LKAAIFKMLE (168 aa). Residues 163-170, 188-192, 209-212, 278-281, and 305-307 each bind GTP; these read GKPSAGKS, FTTLV, DLPG, NKSD, and SAL. The Mg(2+) site is built by Ser-170 and Thr-190. One can recognise an OCT domain in the interval 342-420; sequence NITLDRDALK…IGNFEFDWSD (79 aa).

Belongs to the TRAFAC class OBG-HflX-like GTPase superfamily. OBG GTPase family. In terms of assembly, monomer. Mg(2+) is required as a cofactor.

Its subcellular location is the cytoplasm. In terms of biological role, an essential GTPase which binds GTP, GDP and possibly (p)ppGpp with moderate affinity, with high nucleotide exchange rates and a fairly low GTP hydrolysis rate. Plays a role in control of the cell cycle, stress response, ribosome biogenesis and in those bacteria that undergo differentiation, in morphogenesis control. This is GTPase Obg from Metamycoplasma arthritidis (strain 158L3-1) (Mycoplasma arthritidis).